A 338-amino-acid chain; its full sequence is Thiosulfate-binding protein (338 aa).

A signal peptide spans 1-25 (MAVNLLKKNSLALVASLLLAGHVQA).

It belongs to the prokaryotic sulfate-binding protein family. In terms of assembly, the complex is composed of two ATP-binding proteins (CysA), two transmembrane proteins (CysT and CysW) and a solute-binding protein (CysP).

It is found in the periplasm. In terms of biological role, part of the ABC transporter complex CysAWTP (TC 3.A.1.6.1) involved in sulfate/thiosulfate import. This protein specifically binds thiosulfate and is involved in its transmembrane transport. This chain is Thiosulfate-binding protein (cysP), found in Escherichia coli (strain K12).